We begin with the raw amino-acid sequence, 301 residues long: UDP-N-acetylenolpyruvoylglucosamine reductase 1 (301 aa).

An FAD-binding PCMH-type domain is found at 29–196; sequence KIGGPADILI…LEAEFQLQIG (168 aa). Residue Arg-174 is part of the active site. The active-site Proton donor is Ser-225. Glu-295 is a catalytic residue.

This sequence belongs to the MurB family. FAD serves as cofactor.

Its subcellular location is the cytoplasm. It catalyses the reaction UDP-N-acetyl-alpha-D-muramate + NADP(+) = UDP-N-acetyl-3-O-(1-carboxyvinyl)-alpha-D-glucosamine + NADPH + H(+). It functions in the pathway cell wall biogenesis; peptidoglycan biosynthesis. Cell wall formation. This is UDP-N-acetylenolpyruvoylglucosamine reductase 1 from Bacillus thuringiensis subsp. konkukian (strain 97-27).